Consider the following 313-residue polypeptide: WD repeat-containing protein 82 (313 aa).

WD repeat units follow at residues 19–58 (ENSDKINCFDFSPTGETVISSSDDDSIVLYDCQEGKPKRT), 105–144 (GHSKRVVALSMSPVDDTFISGSLDKTIRLWDLRSPNCQGL), 146–184 (HLQGKPVCSFDPEGLIFAAGVNSEMVKLYDLRSFDKGPF), 192–231 (DRTCEWTALKFSNDGKLILMSTNGGFLRLVDAFKGAVMHT), 236–276 (NNSK…KVAV), and 280–313 (KHTGPITCLQFNPKFMTFTSACSNMAFWLPTIDD).

It belongs to the WD repeat SWD2 family. As to quaternary structure, component of the SET1/COMPASS complex. Component of the PNUTS-PP1 phosphatase complex.

The protein resides in the nucleus. Its subcellular location is the chromosome. The protein localises to the cytoplasm. Its function is as follows. Regulatory component of the SET1/COMPASS complex implicated in the tethering of this complex to transcriptional start sites of active genes. Facilitates histone H3 'Lys-4' methylation (H3K4me) via recruitment of the SETD1A or SETD1B to the 'Ser-5' phosphorylated C-terminal domain (CTD) of RNA polymerase II large subunit (POLR2A). Component of the PNUTS-PP1 protein phosphatase complex, a protein phosphatase 1 (PP1) complex that promotes RNA polymerase II transcription pause-release, allowing transcription elongation. The chain is WD repeat-containing protein 82 (wdr82) from Xenopus tropicalis (Western clawed frog).